The primary structure comprises 291 residues: MFHGSMVALVTPMQVDGAIDDVALRELVEWHIAEGTHALVAVGTTGESATLEMREHVAVIQTVVEQARGRVPVIAGTGANATHEAIELTRAAMEVKADAALLVSPYYNKPTQEGLFQHYSAIAEHCHFPIILYNVPGRTAGDILPETVARLAPRADIIGIKEASGKVERVAEILALCGDQVQVYSGDDGAALAAMALGARGVISVTANAAPRLMARMCDLALAGDFVGARAVNAQLTGLHRDLFLESNPIPVKWALHEMGRMESVLRLPLTTLSSVHHERLRESLRRAQCI.

Position 45 (threonine 45) interacts with pyruvate. Tyrosine 133 (proton donor/acceptor) is an active-site residue. Lysine 161 serves as the catalytic Schiff-base intermediate with substrate. Isoleucine 203 is a pyruvate binding site.

This sequence belongs to the DapA family. Homotetramer; dimer of dimers.

It localises to the cytoplasm. It catalyses the reaction L-aspartate 4-semialdehyde + pyruvate = (2S,4S)-4-hydroxy-2,3,4,5-tetrahydrodipicolinate + H2O + H(+). It participates in amino-acid biosynthesis; L-lysine biosynthesis via DAP pathway; (S)-tetrahydrodipicolinate from L-aspartate: step 3/4. Catalyzes the condensation of (S)-aspartate-beta-semialdehyde [(S)-ASA] and pyruvate to 4-hydroxy-tetrahydrodipicolinate (HTPA). This Acidithiobacillus ferrooxidans (strain ATCC 23270 / DSM 14882 / CIP 104768 / NCIMB 8455) (Ferrobacillus ferrooxidans (strain ATCC 23270)) protein is 4-hydroxy-tetrahydrodipicolinate synthase.